Here is a 582-residue protein sequence, read N- to C-terminus: ATP-dependent lipid A-core flippase (582 aa).

A run of 5 helical transmembrane segments spans residues 16–36, 63–83, 153–173, 253–273, and 275–295; these read LWPT…ALIL, VLVW…ITSY, IIGL…ILIV, PIIQ…ASFP, and VMDS…IALM. Residues 28–310 form the ABC transmembrane type-1 domain; that stretch reads IVAGVALILN…LTNVNAQFQR (283 aa). The region spanning 342-578 is the ABC transporter domain; the sequence is VEFRNVTFTY…RGVYAQLHKM (237 aa). ATP is bound at residue 376-383; sequence GRSGSGKS.

This sequence belongs to the ABC transporter superfamily. Lipid exporter (TC 3.A.1.106) family. In terms of assembly, homodimer.

The protein localises to the cell inner membrane. It catalyses the reaction ATP + H2O + lipid A-core oligosaccharideSide 1 = ADP + phosphate + lipid A-core oligosaccharideSide 2.. Its function is as follows. Involved in lipopolysaccharide (LPS) biosynthesis. Translocates lipid A-core from the inner to the outer leaflet of the inner membrane. Transmembrane domains (TMD) form a pore in the inner membrane and the ATP-binding domain (NBD) is responsible for energy generation. This Escherichia coli O157:H7 protein is ATP-dependent lipid A-core flippase.